A 575-amino-acid polypeptide reads, in one-letter code: Sialate:O-sulfotransferase 1 (575 aa).

Residues 1 to 14 (MAKPFFRLQKFLRR) are Cytoplasmic-facing. The chain crosses the membrane as a helical; Signal-anchor for type II membrane protein span at residues 15-35 (TQFLLFFLTAAYLMTGSLLLL). Residues 36-575 (QRVRVALPQG…TGLPREYVPR (540 aa)) are Extracellular-facing. WSC domains follow at residues 142–234 (RGTY…YRVD) and 245–340 (TATY…DTRC). 2 N-linked (GlcNAc...) asparagine glycosylation sites follow: Asn-257 and Asn-348.

It belongs to the WSCD family.

It localises to the golgi apparatus membrane. The enzyme catalyses a ganglioside GM1b + 3'-phosphoadenylyl sulfate = an 8-O-sulfo-ganglioside GM1b + adenosine 3',5'-bisphosphate + H(+). Its function is as follows. Sialate:O-sulfotransferase which catalyzes 8-O-sulfation at the Sia-glycan level using 3'-phosphoadenosine 5'-phosphosulfate (PAPS) as a donor, forming 8-O-sulfated Sia (Sia8S)-glycans. Displays selectivity toward glycolipids such as GM1 gangliosides. In Homo sapiens (Human), this protein is Sialate:O-sulfotransferase 1 (WSCD1).